Here is a 254-residue protein sequence, read N- to C-terminus: Large ribosomal subunit protein uL2 (254 aa).

This sequence belongs to the universal ribosomal protein uL2 family.

This chain is Large ribosomal subunit protein uL2 (RPL2), found in Eremothecium gossypii (strain ATCC 10895 / CBS 109.51 / FGSC 9923 / NRRL Y-1056) (Yeast).